A 242-amino-acid polypeptide reads, in one-letter code: uncharacterized protein (242 aa).

An N-terminal signal peptide occupies residues 1-20; the sequence is MTFIKGLPLMLLTISLGCNA.

It belongs to the periplasmic pilus chaperone family.

Its subcellular location is the periplasm. In terms of biological role, could be required for the biogenesis of the putative YbgD fimbria. This is an uncharacterized protein from Escherichia coli (strain K12).